An 876-amino-acid polypeptide reads, in one-letter code: Alanine--tRNA ligase (876 aa).

Zn(2+) is bound by residues His-564, His-568, Cys-666, and His-670.

This sequence belongs to the class-II aminoacyl-tRNA synthetase family. As to quaternary structure, homotetramer. Zn(2+) serves as cofactor.

It localises to the cytoplasm. The enzyme catalyses tRNA(Ala) + L-alanine + ATP = L-alanyl-tRNA(Ala) + AMP + diphosphate. Functionally, catalyzes the attachment of alanine to tRNA(Ala) in a two-step reaction: alanine is first activated by ATP to form Ala-AMP and then transferred to the acceptor end of tRNA(Ala). Also edits incorrectly charged Ser-tRNA(Ala) and Gly-tRNA(Ala) via its editing domain. This chain is Alanine--tRNA ligase, found in Salmonella paratyphi A (strain ATCC 9150 / SARB42).